A 237-amino-acid chain; its full sequence is Demethylmenaquinone methyltransferase (237 aa).

S-adenosyl-L-methionine contacts are provided by residues Thr-58, Asp-79, and Asn-106–Ala-107.

This sequence belongs to the class I-like SAM-binding methyltransferase superfamily. MenG/UbiE family.

The enzyme catalyses a 2-demethylmenaquinol + S-adenosyl-L-methionine = a menaquinol + S-adenosyl-L-homocysteine + H(+). The protein operates within quinol/quinone metabolism; menaquinone biosynthesis; menaquinol from 1,4-dihydroxy-2-naphthoate: step 2/2. Its function is as follows. Methyltransferase required for the conversion of demethylmenaquinol (DMKH2) to menaquinol (MKH2). This chain is Demethylmenaquinone methyltransferase, found in Bacillus mycoides (strain KBAB4) (Bacillus weihenstephanensis).